The following is a 499-amino-acid chain: Transcriptional regulator sdnM (499 aa).

The protein resides in the nucleus. It functions in the pathway antibiotic biosynthesis. Transcriptional regulator; part of the gene cluster that mediates the biosynthesis of sordarin and hypoxysordarin, glycoside antibiotics with a unique tetracyclic diterpene aglycone structure. First, the geranylgeranyl diphosphate synthase sdnC constructs GGDP from farnesyl diphosphate and isopentenyl diphosphate. The diterpene cyclase sdnA then catalyzes the cyclization of GGDP to afford cycloaraneosene. Cycloaraneosene is then hydroxylated four times by the putative cytochrome P450 monooxygenases sdnB, sdnE, sdnF and sdnH to give a hydroxylated cycloaraneosene derivative such as cycloaraneosene-8,9,13,19-tetraol. Although the order of the hydroxylations is unclear, at least C8, C9 and C13 of the cycloaraneosene skeleton are hydroxylated before the sordaricin formation. Dehydration of the 13-hydroxy group of the hydroxylated cycloaraneosene derivative might be catalyzed by an unassigned hypothetical protein such as sdnG and sdnP to construct the cyclopentadiene moiety. The FAD-dependent oxidoreductase sdnN is proposed to catalyze the oxidation at C9 of the hydroxylated cycloaraneosene derivative and also catalyze the Baeyer-Villiger oxidation to give the lactone intermediate. The presumed lactone intermediate would be hydrolyzed to give an acrolein moiety and a carboxylate moiety. Then, [4+2]cycloaddition would occur between the acrolein moiety and the cyclopentadiene moiety to give sordaricin. SdnN might also be involved in the [4+2]cycloaddition after the hypothesized oxidation to accommodate the oxidized product and prompt the [4+2]cycloaddition. GDP-6-deoxy-D-altrose may be biosynthesized from GDP-D-mannose by the putative GDP-mannose-4,6-dehydratase sdnI and the short-chain dehydrogenase sdnK. The glycosyltransferase sdnJ catalyzes the attachment of 6-deoxy-D-altrose onto the 19-hydroxy group of sordaricin to give 4'-O-demethylsordarin. The methyltransferase sdnD would complete the biosynthesis of sordarin. Sordarin can be further modified into hypoxysordarin. The unique acyl chain at the 3'-hydroxy group of hypoxysordarin would be constructed by an iterative type I PKS sdnO and the trans-acting polyketide methyltransferase sdnL. SdnL would be responsible for the introduction of an alpha-methyl group of the polyketide chain. Alternatively, the beta-lactamase-like protein sdnR might be responsible for the cleavage and transfer of the polyketide chain from the PKS sdnO to sordarin. Two putative cytochrome P450 monooxygenases, sdnQ and sdnT, might catalyze the epoxidations of the polyketide chain to complete the biosynthesis of hypoxysordarin. Transcriptional regulators sdnM and sdnS are presumably encoded for the transcriptional regulation of the expression of the sdn gene cluster. This Sordaria araneosa (Pleurage araneosa) protein is Transcriptional regulator sdnM.